Reading from the N-terminus, the 273-residue chain is Putative pyruvate, phosphate dikinase regulatory protein (273 aa).

153 to 160 (GISRTSKT) serves as a coordination point for ADP.

This sequence belongs to the pyruvate, phosphate/water dikinase regulatory protein family. PDRP subfamily.

It catalyses the reaction N(tele)-phospho-L-histidyl/L-threonyl-[pyruvate, phosphate dikinase] + ADP = N(tele)-phospho-L-histidyl/O-phospho-L-threonyl-[pyruvate, phosphate dikinase] + AMP + H(+). The catalysed reaction is N(tele)-phospho-L-histidyl/O-phospho-L-threonyl-[pyruvate, phosphate dikinase] + phosphate + H(+) = N(tele)-phospho-L-histidyl/L-threonyl-[pyruvate, phosphate dikinase] + diphosphate. In terms of biological role, bifunctional serine/threonine kinase and phosphorylase involved in the regulation of the pyruvate, phosphate dikinase (PPDK) by catalyzing its phosphorylation/dephosphorylation. The protein is Putative pyruvate, phosphate dikinase regulatory protein of Rhizobium etli (strain ATCC 51251 / DSM 11541 / JCM 21823 / NBRC 15573 / CFN 42).